Consider the following 532-residue polypeptide: Monolignol oxidoreductase AtBBE-like 15 (532 aa).

Residues 1-27 (MAFAISKRNATLFLVTLLLISVPLSSS) form the signal peptide. Cys-36 and Cys-100 are disulfide-bonded. An N-linked (GlcNAc...) asparagine glycan is attached at Asn-57. An FAD-binding PCMH-type domain is found at 76–254 (TPSNPKPVFI…LAWKIKLVPV (179 aa)). Positions 115–179 (HDYEGLSFVA…QTHGFPAGLC (65 aa)) form a cross-link, 6-(S-cysteinyl)-8alpha-(pros-histidyl)-FAD (His-Cys). Asn-306 and Asn-431 each carry an N-linked (GlcNAc...) asparagine glycan.

Belongs to the oxygen-dependent FAD-linked oxidoreductase family. The cofactor is FAD. The FAD cofactor is bound via a bicovalent 6-S-cysteinyl, 8alpha-N1-histidyl FAD linkage. In terms of tissue distribution, expressed in sepals and stamen.

The protein resides in the secreted. Its subcellular location is the cell wall. It catalyses the reaction (E)-4-coumaroyl alcohol + A = (E)-4-coumaraldehyde + AH2. It carries out the reaction (E)-coniferol + A = (E)-coniferaldehyde + AH2. The catalysed reaction is (E)-sinapyl alcohol + A = (E)-sinapaldehyde + AH2. The enzyme catalyses 4-O-(beta-D-glucosyl)-(E)-coniferol + A = 4-O-(beta-D-glucosyl)-4-(E)-coniferyl aldehyde + AH2. Required for endosperm development and polar nuclei fusion. Mediates oxidation of p-hydroxylated derivatives of cinnamyl alcohol (i.e. the monolignols p-coumaryl-, coniferyl-, and sinapyl alcohol) to their corresponding aldehydes. Can also use the beta-O-glycosylated form of coniferyl alcohol (coniferin) as substrate, but is much less efficient towards cinnamyl alcohol. The electron acceptor required for these reactions is not known, but does not seem to be dioxygen. This Arabidopsis thaliana (Mouse-ear cress) protein is Monolignol oxidoreductase AtBBE-like 15.